Here is a 407-residue protein sequence, read N- to C-terminus: ADDKNPLEECFREDDHRIVREYIRKFGLKLNEFVQETENGWYFIKNIRKRVGEVKKDPGLLKYPVKPSEAGKSAGQLYQESLGKAVEELKRTNCSYILNKYDTYSTKEYLIKEGNLSPGAVDMIGDLLNEDSGYYVSFIESLKHDDIFAYEKRFDEIVGGMDQLPTSMYRAIEESVRFKARVIKIQQNAEKVTVTYQTTQKNLLLETVDYVIVCTTSRAARRITFKPPLPPKKAHALRSVHYRSGTKIFLTCTKKFWEDDGIQGGKSTTDLPSRFIYYPNHNFTTGVGVIIAYGIGDDANFFQALNLNECADIVFNDLSSIHQLPKKDLQTFCYPSIIQKWSLDKYAMGAITTFTPYQFQHFSEALTAPVGRIFFAGEYTANAHGWIDSTIKSGLTAARDVNRASEL.

Cys10 and Cys94 are oxidised to a cystine. A glycan (N-linked (GlcNAc...) asparagine) is linked at Asn93. A substrate-binding site is contributed by His144. Val182 lines the FAD pocket. An intrachain disulfide couples Cys252 to Cys333. An N-linked (GlcNAc...) asparagine glycan is attached at Asn282. Tyr293 lines the substrate pocket. Residues Glu378 and 385 to 390 contribute to the FAD site; that span reads GWIDST. 385-386 serves as a coordination point for substrate; sequence GW.

Belongs to the flavin monoamine oxidase family. FIG1 subfamily. In terms of assembly, homodimer; non-covalently linked. The cofactor is FAD. As to expression, expressed by the venom gland.

Its subcellular location is the secreted. It catalyses the reaction an L-alpha-amino acid + O2 + H2O = a 2-oxocarboxylate + H2O2 + NH4(+). The enzyme catalyses L-leucine + O2 + H2O = 4-methyl-2-oxopentanoate + H2O2 + NH4(+). The catalysed reaction is L-phenylalanine + O2 + H2O = 3-phenylpyruvate + H2O2 + NH4(+). It carries out the reaction L-isoleucine + O2 + H2O = (S)-3-methyl-2-oxopentanoate + H2O2 + NH4(+). It catalyses the reaction L-aspartate + O2 + H2O = oxaloacetate + H2O2 + NH4(+). The enzyme catalyses L-lysine + O2 + H2O = 6-amino-2-oxohexanoate + H2O2 + NH4(+). The catalysed reaction is L-glutamate + O2 + H2O = H2O2 + 2-oxoglutarate + NH4(+). Functionally, catalyzes an oxidative deamination of predominantly hydrophobic and aromatic L-amino acids, thus producing hydrogen peroxide that may contribute to the diverse toxic effects of this enzyme. Is highly active on L-Leu followed by L-Phe and L-Ile, moderately active on L-Asp, L-Glu, and L-Lys, and not active on L-Pro, L-Asn, L-Gly, L-Ser and L-Cys. Exhibits diverse biological activities such as antibacterial activity (Minimal inhibitory concentrations (MIC) are 9.0 ug/ml against S.aureus, 144.0 ug/ml against P.aeruginosa and 288.0 ug/ml against E.coli) and inhibition of ADP- and TMVA-induced platelet aggregation. Effects of snake L-amino oxidases on platelets are controversial, since they either induce aggregation or inhibit agonist-induced aggregation. These different effects are probably due to different experimental conditions. Unlike other snake venom L-amino acid oxidases, does not induce hemorrhage. This protein may also induce hemolysis, edema, apoptosis and have antiparasitic activities. In Daboia siamensis (Eastern Russel's viper), this protein is L-amino-acid oxidase.